Consider the following 164-residue polypeptide: MNIMRIPRLYVENAEKHEGRKVVIENGGKVIKFLDKDEEYEGDGKVLYQVIYDDFDNYVLMGTVTKDMIIEYEVGGVRQITYIKKGTKLLEIPAEGYKVYPIVDFGCRILGGHRIAALQSRKGDIRFVNTPVNGIVLFLKEVPAKRENYVFYILPEEEIKFEEE.

This is an uncharacterized protein from Methanocaldococcus jannaschii (strain ATCC 43067 / DSM 2661 / JAL-1 / JCM 10045 / NBRC 100440) (Methanococcus jannaschii).